A 226-amino-acid chain; its full sequence is Transmembrane 4 L6 family member 20 (226 aa).

Topologically, residues 1–14 (MTCCEGWTSCNGFS) are lumenal. Residues 15–35 (LLILILLGVVINCIPLGISLV) traverse the membrane as a helical segment. Residues 36–49 (EADSTSQNPISCYE) are Cytoplasmic-facing. A helical transmembrane segment spans residues 50-70 (WWFPGIIGAGLMAIPATTMSL). Topologically, residues 71–83 (AARKRACCNNKTG) are lumenal. The helical transmembrane segment at 84-104 (MFLSSLFSVITVVGAVYCMLV) threads the bilayer. Residues 105–191 (SLQALLEGPL…RIFHFSVFMS (87 aa)) lie on the Cytoplasmic side of the membrane. Residues 192–212 (LLLVGILELLFGLSQILIGFL) traverse the membrane as a helical segment. Residues 213 to 226 (GCLCGVSQRRSQIV) are Lumenal-facing.

Belongs to the L6 tetraspanin family. In terms of processing, glycosylated at Asn-132, Asn-148 and Asn-163 in presence of ceramide which inverts the orientation of TM4SF20 in membranes exposing these residues to the endoplasmic reticulum lumen. Post-translationally, cleaved by signal peptidase at Ser-14 but the peptide does not act as a signal peptide. Cleavage is inhibited by ceramide which inverts the orientation of TM4SF20 in membranes exposing the N-terminus to the cytosol and not to the endoplasmic reticulum lumen.

The protein resides in the membrane. The protein localises to the endoplasmic reticulum membrane. Functionally, polytopic transmembrane protein. Inhibits regulated intramembrane proteolysis (RIP) of CREB3L1, inhibiting its activation and the induction of collagen synthesis. In response to ceramide, which alters TM4SF20 membrane topology, stimulates RIP activation of CREB3L1. Ceramide reverses the direction through which transmembrane helices are translocated into the endoplasmic reticulum membrane during translation of TM4SF20, this mechanism is called 'regulated alternative translocation' (RAT) and regulates the function of the transmembrane protein. The sequence is that of Transmembrane 4 L6 family member 20 (Tm4sf20) from Mus musculus (Mouse).